The primary structure comprises 406 residues: Probable sphingosine-1-phosphate phosphatase (406 aa).

The next 2 membrane-spanning stretches (helical) occupy residues 66 to 86 (ILGE…CVAT) and 92 to 112 (LCVV…TFTL). A phosphatase sequence motif I region spans residues 107-115 (KNTFTLPRP). The segment at 133-136 (PSTH) is phosphatase sequence motif II. His-136 serves as the catalytic Proton donor. The next 2 helical transmembrane spans lie at 138 to 158 (ASAF…FPTI) and 162 to 182 (FNIS…SVMF). Residues 183 to 194 (SRLYNGHHTPMD) form a phosphatase sequence motif III region. The active-site Nucleophile is His-190. The next 5 helical transmembrane spans lie at 193 to 213 (MDVI…TYQL), 225 to 245 (TFLF…FFHP), 254 to 274 (AYPE…SLWL), 313 to 333 (ILIG…FFFF), and 374 to 394 (LFVY…FYYL).

Belongs to the type 2 lipid phosphate phosphatase family.

It is found in the endoplasmic reticulum membrane. In terms of biological role, has enzymatic activity against both sphingosine 1 phosphate (S1P) and dihydro-S1P. Regulates intracellular and extracellular S1P levels. The polypeptide is Probable sphingosine-1-phosphate phosphatase (sppA) (Dictyostelium discoideum (Social amoeba)).